Reading from the N-terminus, the 126-residue chain is Glycine cleavage system H protein (126 aa).

The 83-residue stretch at A23–R105 folds into the Lipoyl-binding domain. At K64 the chain carries N6-lipoyllysine.

The protein belongs to the GcvH family. The glycine cleavage system is composed of four proteins: P, T, L and H. Requires (R)-lipoate as cofactor.

Its function is as follows. The glycine cleavage system catalyzes the degradation of glycine. The H protein shuttles the methylamine group of glycine from the P protein to the T protein. The sequence is that of Glycine cleavage system H protein from Rubrobacter xylanophilus (strain DSM 9941 / JCM 11954 / NBRC 16129 / PRD-1).